We begin with the raw amino-acid sequence, 197 residues long: Peptidyl-tRNA hydrolase (197 aa).

Tyr23 contributes to the tRNA binding site. The active-site Proton acceptor is the His28. Residues Phe73, Asn75, and Asn121 each contribute to the tRNA site.

The protein belongs to the PTH family. Monomer.

It is found in the cytoplasm. It carries out the reaction an N-acyl-L-alpha-aminoacyl-tRNA + H2O = an N-acyl-L-amino acid + a tRNA + H(+). Hydrolyzes ribosome-free peptidyl-tRNAs (with 1 or more amino acids incorporated), which drop off the ribosome during protein synthesis, or as a result of ribosome stalling. In terms of biological role, catalyzes the release of premature peptidyl moieties from peptidyl-tRNA molecules trapped in stalled 50S ribosomal subunits, and thus maintains levels of free tRNAs and 50S ribosomes. The sequence is that of Peptidyl-tRNA hydrolase from Frankia casuarinae (strain DSM 45818 / CECT 9043 / HFP020203 / CcI3).